Reading from the N-terminus, the 428-residue chain is Adenylosuccinate synthetase (428 aa).

GTP is bound by residues 12–18 (GDEGKGK) and 40–42 (GHT). Aspartate 13 serves as the catalytic Proton acceptor. Mg(2+) is bound by residues aspartate 13 and glycine 40. Residues 13–16 (DEGK), 38–41 (NAGH), threonine 129, arginine 143, glutamine 224, threonine 239, and arginine 303 each bind IMP. Histidine 41 acts as the Proton donor in catalysis. 299-305 (VTTGRIR) is a binding site for substrate. GTP is bound by residues arginine 305, 331–333 (KVD), and 410–412 (AYG).

This sequence belongs to the adenylosuccinate synthetase family. Homodimer. It depends on Mg(2+) as a cofactor.

It is found in the cytoplasm. The catalysed reaction is IMP + L-aspartate + GTP = N(6)-(1,2-dicarboxyethyl)-AMP + GDP + phosphate + 2 H(+). It functions in the pathway purine metabolism; AMP biosynthesis via de novo pathway; AMP from IMP: step 1/2. Its function is as follows. Plays an important role in the de novo pathway of purine nucleotide biosynthesis. Catalyzes the first committed step in the biosynthesis of AMP from IMP. The chain is Adenylosuccinate synthetase from Francisella tularensis subsp. tularensis (strain FSC 198).